The sequence spans 305 residues: Tyrosine recombinase XerC (305 aa).

One can recognise a Core-binding (CB) domain in the interval methionine 1–valine 93. One can recognise a Tyr recombinase domain in the interval arginine 114 to aspartate 294. Catalysis depends on residues arginine 155, lysine 179, histidine 246, arginine 249, and histidine 272. The active-site O-(3'-phospho-DNA)-tyrosine intermediate is tyrosine 281.

This sequence belongs to the 'phage' integrase family. XerC subfamily. In terms of assembly, forms a cyclic heterotetrameric complex composed of two molecules of XerC and two molecules of XerD.

Its subcellular location is the cytoplasm. In terms of biological role, site-specific tyrosine recombinase, which acts by catalyzing the cutting and rejoining of the recombining DNA molecules. The XerC-XerD complex is essential to convert dimers of the bacterial chromosome into monomers to permit their segregation at cell division. It also contributes to the segregational stability of plasmids. This Neisseria gonorrhoeae (strain ATCC 700825 / FA 1090) protein is Tyrosine recombinase XerC.